The chain runs to 264 residues: Glutamate racemase (264 aa).

Substrate contacts are provided by residues 10–11 (DS) and 42–43 (YG). The active-site Proton donor/acceptor is C73. A substrate-binding site is contributed by 74 to 75 (NT). C181 functions as the Proton donor/acceptor in the catalytic mechanism. Substrate is bound at residue 182–183 (TH).

This sequence belongs to the aspartate/glutamate racemases family.

It catalyses the reaction L-glutamate = D-glutamate. The protein operates within cell wall biogenesis; peptidoglycan biosynthesis. In terms of biological role, provides the (R)-glutamate required for cell wall biosynthesis. The sequence is that of Glutamate racemase from Thermoanaerobacter sp. (strain X514).